We begin with the raw amino-acid sequence, 68 residues long: Small ribosomal subunit protein bS21 (68 aa).

The protein belongs to the bacterial ribosomal protein bS21 family.

This is Small ribosomal subunit protein bS21 from Cereibacter sphaeroides (strain ATCC 17029 / ATH 2.4.9) (Rhodobacter sphaeroides).